We begin with the raw amino-acid sequence, 343 residues long: GTPase Obg (343 aa).

The Obg domain occupies 1 to 157 (MKFIDEVSIS…IEVRLELKLI (157 aa)). The disordered stretch occupies residues 13-44 (SGRGGPGCVSFRRESMQARGGPDGGNGGKGGD). Residues 33–43 (GPDGGNGGKGG) show a composition bias toward gly residues. One can recognise an OBG-type G domain in the interval 158-338 (ADVGIVGFPN…FVQELARQIL (181 aa)). Residues 164-171 (GFPNAGKS), 189-193 (FTTLT), 211-214 (DIPG), 290-293 (NKID), and 319-321 (SAV) each bind GTP. Positions 171 and 191 each coordinate Mg(2+).

Belongs to the TRAFAC class OBG-HflX-like GTPase superfamily. OBG GTPase family. As to quaternary structure, monomer. Mg(2+) is required as a cofactor.

The protein resides in the cytoplasm. Its function is as follows. An essential GTPase which binds GTP, GDP and possibly (p)ppGpp with moderate affinity, with high nucleotide exchange rates and a fairly low GTP hydrolysis rate. Plays a role in control of the cell cycle, stress response, ribosome biogenesis and in those bacteria that undergo differentiation, in morphogenesis control. The sequence is that of GTPase Obg from Bdellovibrio bacteriovorus (strain ATCC 15356 / DSM 50701 / NCIMB 9529 / HD100).